The sequence spans 796 residues: Molybdenum cofactor sulfurase (796 aa).

Position 246 is an N6-(pyridoxal phosphate)lysine (lysine 246). The active site involves cysteine 418. The region spanning 650 to 796 (LRLLRQSSQR…LTCGDVVVVT (147 aa)) is the MOSC domain. Residue serine 752 is modified to Phosphoserine.

Belongs to the class-V pyridoxal-phosphate-dependent aminotransferase family. MOCOS subfamily. Pyridoxal 5'-phosphate is required as a cofactor.

The catalysed reaction is Mo-molybdopterin + L-cysteine + AH2 = thio-Mo-molybdopterin + L-alanine + A + H2O. In terms of biological role, sulfurates the molybdenum cofactor. Sulfation of molybdenum is essential for xanthine dehydrogenase (XDH) and aldehyde oxidase (ADO) enzymes in which molybdenum cofactor is liganded by 1 oxygen and 1 sulfur atom in active form. The polypeptide is Molybdenum cofactor sulfurase (Drosophila persimilis (Fruit fly)).